A 326-amino-acid polypeptide reads, in one-letter code: Polycomb complex protein BMI-1 (326 aa).

The RING-type zinc finger occupies 18-57 (CVLCGGYFIDATTIIECLHSFCKTCIVRYLETSKYCPICD). A Nuclear localization signal motif is present at residues 81 to 95 (KLVPGLFKNEMKRRR). Positions 162–182 (RYLRCPAAMTVMHLRKFLRSK) are interaction with PHC2. Residues 164–228 (LRCPAAMTVM…GPLPLKYRVR (65 aa)) form an interaction with E4F1 region. The interval 236–326 (ISHQRDGLTN…VNGSSATSSG (91 aa)) is disordered. Composition is skewed to low complexity over residues 266 to 278 (PSTS…PSTP), 290 to 303 (SSTM…PSGN), and 315 to 326 (SSVNGSSATSSG).

As to quaternary structure, component of a PRC1-like complex. Identified in a PRC1-like HPRC-H complex with CBX2, CBX4, CBX8, PHC1, PHC2, PHC3 RING1 and RNF2. Interacts with RNF2/RING2. Interacts with RING1. Part of a complex that contains RNF2, UB2D3 and BMI1, where RNF2 and BMI1 form a tight heterodimer, and UB2D3 interacts only with RNF2. The complex composed of RNF2, UB2D3 and BMI1 binds nucleosomes, and has activity only with nucleosomal histone H2A. Interacts with CBX7 and CBX8. Interacts with SPOP. Part of a complex consisting of BMI1, CUL3 and SPOP. Interacts with E4F1. Interacts with PHC2. Interacts with zinc finger protein ZNF277. May be part of a complex including at least ZNF277, BMI1 and RNF2/RING2. In terms of processing, may be polyubiquitinated; which does not lead to proteasomal degradation. Monoubiquitinated.

It localises to the nucleus. Its subcellular location is the cytoplasm. Its function is as follows. Component of a Polycomb group (PcG) multiprotein PRC1-like complex, a complex class required to maintain the transcriptionally repressive state of many genes, including Hox genes, throughout development. PcG PRC1 complex acts via chromatin remodeling and modification of histones; it mediates monoubiquitination of histone H2A 'Lys-119', rendering chromatin heritably changed in its expressibility. The complex composed of RNF2, UB2D3 and BMI1 binds nucleosomes, and has activity only with nucleosomal histone H2A. In the PRC1-like complex, regulates the E3 ubiquitin-protein ligase activity of RNF2/RING2. The polypeptide is Polycomb complex protein BMI-1 (BMI1) (Bos taurus (Bovine)).